Reading from the N-terminus, the 379-residue chain is Mating-type protein MAT-1 (379 aa).

Positions 60 to 117 (RARKALNAFVRFRCYYVAIPMFKQWPMKKLSNLIGLLWEADPNKSLWSLMTKAWSTIR) form a DNA-binding region, alpha box.

It belongs to the MATALPHA1 family.

The protein resides in the nucleus. Functionally, mating type proteins are sequence specific DNA-binding proteins that act as master switches in fungal differentiation by controlling gene expression in a cell type-specific fashion. Transcriptional activator that induces the transcription of alpha-specific genes. This is Mating-type protein MAT-1 (MAT1) from Curvularia kusanoi (Cochliobolus kusanoi).